The chain runs to 135 residues: Ribosome-binding factor A (135 aa).

The protein belongs to the RbfA family. As to quaternary structure, monomer. Binds 30S ribosomal subunits, but not 50S ribosomal subunits or 70S ribosomes.

Its subcellular location is the cytoplasm. Its function is as follows. One of several proteins that assist in the late maturation steps of the functional core of the 30S ribosomal subunit. Associates with free 30S ribosomal subunits (but not with 30S subunits that are part of 70S ribosomes or polysomes). Required for efficient processing of 16S rRNA. May interact with the 5'-terminal helix region of 16S rRNA. This is Ribosome-binding factor A from Bartonella tribocorum (strain CIP 105476 / IBS 506).